Here is a 174-residue protein sequence, read N- to C-terminus: CASP-like protein 4D2 (174 aa).

The Cytoplasmic segment spans residues 1 to 14; it reads MAPPPPSPPAVSLK. Residues 15-35 traverse the membrane as a helical segment; sequence VLLLLLRVLTGVFLVIALIIL. The Extracellular segment spans residues 36–60; that stretch reads STNSVTIVSQGSALKFHFKDVYAYR. The helical transmembrane segment at 61–81 threads the bilayer; sequence YMLSAAVIGLVYAVIQLFFTI. Residues 82–97 are Cytoplasmic-facing; the sequence is SEFATGVKNPFNYQLD. The chain crosses the membrane as a helical span at residues 98–118; the sequence is FYGDKLISYLVATGSAAGFGV. The Extracellular segment spans residues 119–150; it reads TKDLKDTFLALVALDSTDPVDKFFSKGYASAS. Residues 151–171 traverse the membrane as a helical segment; the sequence is LLLFAFICLAVLSVFSSFAMA. The Cytoplasmic portion of the chain corresponds to 172–174; the sequence is KRN.

Belongs to the Casparian strip membrane proteins (CASP) family. Homodimer and heterodimers.

It localises to the cell membrane. This Arabidopsis thaliana (Mouse-ear cress) protein is CASP-like protein 4D2.